Reading from the N-terminus, the 329-residue chain is Quinone-oxidoreductase homolog, chloroplastic (329 aa).

Belongs to the zinc-containing alcohol dehydrogenase family. Quinone oxidoreductase subfamily. In terms of processing, the transit peptide is not cleaved.

Its subcellular location is the plastid. The protein localises to the chloroplast inner membrane. This chain is Quinone-oxidoreductase homolog, chloroplastic (QOR), found in Spinacia oleracea (Spinach).